The chain runs to 424 residues: UDP-sugar transporter protein SLC35A5 (424 aa).

At 1–8 (MEKQCCSH) the chain is on the cytoplasmic side. Residues 9–29 (PVICSLSTMYTFLLGAIFIAL) form a helical membrane-spanning segment. Residues 30–53 (SSSRILLVKYSANEENKYDYLPTT) are Lumenal-facing. Residues 54–74 (ANVCSELVKLVFCVLVSFCVI) form a helical membrane-spanning segment. Residues 75-93 (KKDHQSRNLKYASWKEFSN) lie on the Cytoplasmic side of the membrane. Residues 94 to 116 (FMKWSIPAFLYFLDNLIVFYVLS) traverse the membrane as a helical segment. The Lumenal portion of the chain corresponds to 117–119 (YLQ). The chain crosses the membrane as a helical span at residues 120-142 (PAMAVIFSNFSIITTALLFRIVL). Over 143 to 147 (KRRLN) the chain is Cytoplasmic. Residues 148-168 (WIQWASLLILFLSIVALTAGT) traverse the membrane as a helical segment. Over 169 to 228 (KTLQHNLAGHGFHHDAFFSPSNSCLLFRSECPRKDNCTAKEWTFPEAKWNTTARVFSHIR) the chain is Lumenal. N-linked (GlcNAc...) asparagine glycosylation occurs at N204. A helical transmembrane segment spans residues 229-249 (LGMGHVLIIVQCFISSMANIY). Residues 250-263 (NEKILKEGNQLAES) are Cytoplasmic-facing. Residues 264 to 284 (IFIQNSKLYFFGILFNGLTLG) traverse the membrane as a helical segment. Residues 285–303 (LQRSNRDQIKNCGFFYGHN) are Lumenal-facing. The helical transmembrane segment at 304-324 (AFSVALIFVTAFQGLSVAFIL) threads the bilayer. Topologically, residues 325–330 (KFLDNM) are cytoplasmic. Residues 331 to 351 (FHVLMAQVTTVIITTVSVLVF) form a helical membrane-spanning segment. Residues 352 to 354 (DFR) are Lumenal-facing. The helical transmembrane segment at 355–375 (PSLEFFLEAPSVLLSIFIYNA) threads the bilayer. At 376–424 (SKPQGPEYAPRQERIRDLSGNLWERSSGDGEELERLTKPKSDESDEDTF) the chain is on the cytoplasmic side. Residues S394, S416, and S419 each carry the phosphoserine modification. Residues 395-424 (GNLWERSSGDGEELERLTKPKSDESDEDTF) are disordered. Residues 408–417 (LERLTKPKSD) are compositionally biased toward basic and acidic residues.

This sequence belongs to the nucleotide-sugar transporter family. SLC35A subfamily. As to quaternary structure, probably forms homooligomers and heterooligomers with SLC35A1, SLC35A2, SLC35A3 and SLC35A4.

It is found in the golgi apparatus membrane. The catalysed reaction is UMP(out) + UDP-alpha-D-glucuronate(in) = UMP(in) + UDP-alpha-D-glucuronate(out). It carries out the reaction UMP(out) + UDP-N-acetyl-alpha-D-glucosamine(in) = UMP(in) + UDP-N-acetyl-alpha-D-glucosamine(out). The enzyme catalyses UDP-N-acetyl-alpha-D-galactosamine(in) + UMP(out) = UDP-N-acetyl-alpha-D-galactosamine(out) + UMP(in). In terms of biological role, probable UDP-sugar:UMP transmembrane antiporter involved in UDP-alpha-D-glucuronate/UDP-GlcA, UDP-GlcNAc/UDP-N-acetyl-alpha-D-glucosamine and UDP-N-acetyl-alpha-D-galactosamine/UDP-GalNAc transport from the cytosol to the lumen of the Golgi. The chain is UDP-sugar transporter protein SLC35A5 from Pongo abelii (Sumatran orangutan).